The following is a 598-amino-acid chain: Aspartate--tRNA(Asp/Asn) ligase (598 aa).

Glu-177 contacts L-aspartate. Positions 201-204 are aspartate; that stretch reads QLFK. Arg-223 provides a ligand contact to L-aspartate. ATP contacts are provided by residues 223–225 and Gln-232; that span reads RDE. His-456 is a binding site for L-aspartate. ATP is bound at residue Glu-493. Arg-500 contacts L-aspartate. Residue 545 to 548 coordinates ATP; that stretch reads GVDR.

It belongs to the class-II aminoacyl-tRNA synthetase family. Type 1 subfamily. In terms of assembly, homodimer.

The protein localises to the cytoplasm. It catalyses the reaction tRNA(Asx) + L-aspartate + ATP = L-aspartyl-tRNA(Asx) + AMP + diphosphate. Functionally, aspartyl-tRNA synthetase with relaxed tRNA specificity since it is able to aspartylate not only its cognate tRNA(Asp) but also tRNA(Asn). Reaction proceeds in two steps: L-aspartate is first activated by ATP to form Asp-AMP and then transferred to the acceptor end of tRNA(Asp/Asn). The polypeptide is Aspartate--tRNA(Asp/Asn) ligase (Prochlorococcus marinus subsp. pastoris (strain CCMP1986 / NIES-2087 / MED4)).